We begin with the raw amino-acid sequence, 517 residues long: Probable protein phosphatase 2C 20 (517 aa).

Residues 1–59 (MWVMQGERRRARAPWGPPDTGGALLERWISRERRSDSRDASGSAKQRSAMGNSLPVESK) are disordered. Residues 28–39 (WISRERRSDSRD) are compositionally biased toward basic and acidic residues. Positions 70–373 (KYVVSSMQGW…DNTTVILVLF (304 aa)) constitute a PPM-type phosphatase domain. Residues Asp-105, Gly-106, Glu-323, and Asp-364 each contribute to the Mn(2+) site. Positions 380–517 (AVPPVDTDTD…PPHDDTYHRW (138 aa)) are disordered. The segment covering 402–414 (GSNNATASDNNDP) has biased composition (polar residues). Low complexity predominate over residues 438–455 (DATATAVGSSSTTAVAAD). Residues 499 to 517 (LPRSNPDKSPPHDDTYHRW) show a composition bias toward basic and acidic residues.

This sequence belongs to the PP2C family. It depends on Mg(2+) as a cofactor. Mn(2+) is required as a cofactor.

The catalysed reaction is O-phospho-L-seryl-[protein] + H2O = L-seryl-[protein] + phosphate. It catalyses the reaction O-phospho-L-threonyl-[protein] + H2O = L-threonyl-[protein] + phosphate. This Oryza sativa subsp. japonica (Rice) protein is Probable protein phosphatase 2C 20.